The sequence spans 412 residues: Protein ALF (412 aa).

Disordered stretches follow at residues 1-47 (MDPE…PLPP) and 154-234 (GLSE…GISE). Over residues 31–47 (PPQPPPPPLPPPQPLPP) the composition is skewed to pro residues. A compositionally biased stretch (basic residues) spans 187–196 (MRQRRRKKVV). A compositionally biased stretch (acidic residues) spans 206-221 (MEEDEDTEEGQEDNED). DNA-binding regions lie at residues 237–241 (REHPF), 306–313 (NKPKMRHY), and 377–380 (YVPT).

This sequence belongs to the FLO/LFY family. Expressed in the floral meristem and also in the vegetative meristem.

It is found in the nucleus. Functionally, probable transcription factor required for the specification of floral meristem identity. This chain is Protein ALF (ALF), found in Petunia hybrida (Petunia).